The primary structure comprises 117 residues: Small ribosomal subunit protein bS6 (117 aa).

The interval 96–117 (HDEGPSVQMQKRDEREGRRERR) is disordered.

This sequence belongs to the bacterial ribosomal protein bS6 family.

Its function is as follows. Binds together with bS18 to 16S ribosomal RNA. The sequence is that of Small ribosomal subunit protein bS6 from Jannaschia sp. (strain CCS1).